The following is a 290-amino-acid chain: Succinate dehydrogenase [ubiquinone] iron-sulfur subunit, mitochondrial (290 aa).

A mitochondrion-targeting transit peptide spans 1 to 38; it reads MAAAVVGVSLRRGVPARFLRAGLRPVRGLEAVHGICRG. Positions 50–143 constitute a 2Fe-2S ferredoxin-type domain; sequence KKFSIYRWDP…TTKIYPLPHM (94 aa). Cys103, Cys108, Cys111, and Cys123 together coordinate [2Fe-2S] cluster. Positions 186-216 constitute a 4Fe-4S ferredoxin-type domain; sequence DRQKLDGLYECILCACCSTSCPSYWWNGDKY. [4Fe-4S] cluster contacts are provided by Cys196, Cys199, and Cys202. Cys206 provides a ligand contact to [3Fe-4S] cluster. Position 211 (Trp211) interacts with a ubiquinone. Residues Cys253 and Cys259 each coordinate [3Fe-4S] cluster. [4Fe-4S] cluster is bound at residue Cys263.

The protein belongs to the succinate dehydrogenase/fumarate reductase iron-sulfur protein family. In terms of assembly, component of complex II composed of four subunits: the flavoprotein (FP) SDHA, iron-sulfur protein (IP) SDHB, and a cytochrome b560 composed of SDHC and SDHD. It depends on [2Fe-2S] cluster as a cofactor. The cofactor is [3Fe-4S] cluster. Requires [4Fe-4S] cluster as cofactor.

The protein resides in the mitochondrion inner membrane. The catalysed reaction is a quinone + succinate = fumarate + a quinol. The enzyme catalyses (R)-malate + a quinone = enol-oxaloacetate + a quinol. It carries out the reaction (S)-malate + a quinone = enol-oxaloacetate + a quinol. It participates in carbohydrate metabolism; tricarboxylic acid cycle; fumarate from succinate (eukaryal route): step 1/1. With respect to regulation, enol-oxaloacetate inhibits the succinate dehydrogenase activity. In terms of biological role, iron-sulfur protein (IP) subunit of the succinate dehydrogenase complex (mitochondrial respiratory chain complex II), responsible for transferring electrons from succinate to ubiquinone (coenzyme Q). SDH also oxidizes malate to the non-canonical enol form of oxaloacetate, enol-oxaloacetate. Enol-oxaloacetate, which is a potent inhibitor of the succinate dehydrogenase activity, is further isomerized into keto-oxaloacetate. This Gallus gallus (Chicken) protein is Succinate dehydrogenase [ubiquinone] iron-sulfur subunit, mitochondrial (SDHB).